Reading from the N-terminus, the 471-residue chain is Secretogranin-3 (471 aa).

Positions 1 to 22 are cleaved as a signal peptide; the sequence is MGFLWTGSWILVLVLNSGPIQA. Disordered regions lie at residues 24-45, 89-108, and 345-404; these read PKPE…ERPL, TVEK…QLNV, and KLEK…TDEA. Residues 28-45 are compositionally biased toward basic and acidic residues; that stretch reads GSQDKSLHNRELSAERPL. S40 bears the Phosphoserine mark. S40 carries an O-linked (Xyl...) (chondroitin sulfate) serine glycan. 2 stretches are compositionally biased toward basic and acidic residues: residues 345–355 and 364–404; these read KLEKNTTDSKS and KSQE…TDEA. S365 is modified (phosphoserine).

In terms of assembly, interacts with CHGA. Interacts with secretogranin II/SCG2. Interacts (via C-terminus) with CPE. In terms of tissue distribution, expressed in various brain areas, with highest levels in the arcuate nucleus and the lateral hypothalamic area, as well as the paraventricular nucleus and the ventromedial hypothalamus (at protein level).

Its subcellular location is the cytoplasmic vesicle. It localises to the secretory vesicle. It is found in the secretory vesicle membrane. The protein resides in the secreted. Functionally, member of the granin protein family that regulates the biogenesis of secretory granules. Acts as a sorting receptor for intragranular proteins including chromogranin A/CHGA. May also play a role in angiogenesis. Promotes endothelial proliferation, migration and tube formation through MEK/ERK signaling pathway. The chain is Secretogranin-3 (Scg3) from Mus musculus (Mouse).